Here is a 472-residue protein sequence, read N- to C-terminus: Membrane-bound acylglycerophosphatidylinositol O-acyltransferase MBOAT7 (472 aa).

At 1-5 (MSPEE) the chain is on the cytoplasmic side. The helical transmembrane segment at 6 to 22 (WTYLVVLLISIPIGFLF) threads the bilayer. Residues 23-33 (KKAGPGLKRWG) lie on the Lumenal side of the membrane. The chain crosses the membrane as a helical span at residues 34-57 (AAAVGLGLTLFTCGPHTLHSLVTI). The Cytoplasmic segment spans residues 58 to 73 (LGTWALIQAQPCSCHA). Residues 74–93 (LALAWTFSYLLFFRALSLLG) traverse the membrane as a helical segment. Residues 94-194 (LPTPTPFTNA…VPSLRPLLRR (101 aa)) lie on the Lumenal side of the membrane. The chain crosses the membrane as a helical span at residues 195 to 212 (AWPAPLFGLLFLLSSHLF). At 213-231 (PLEAVREDAFYARPLPARL) the chain is on the cytoplasmic side. Residues 232–261 (FYMIPVFFAFRMRFYVAWIAAECGCIAAGF) form a helical membrane-spanning segment. The Lumenal segment spans residues 262–426 (GAYPVAAKAR…LSLRDTLRYW (165 aa)). The N-linked (GlcNAc...) asparagine glycan is linked to N321. The helical transmembrane segment at 427 to 447 (ASVYFCVHVLALAALGLGLAL) threads the bilayer. Topologically, residues 448–472 (GRGGPGRRKSGAPAPSPASGKLREE) are cytoplasmic. The tract at residues 450–472 (GGPGRRKSGAPAPSPASGKLREE) is disordered.

It belongs to the membrane-bound acyltransferase family. As to quaternary structure, interacts with SPTSSA; the interaction facilitates MBOAT7 location to mitochondria-associated membranes (MAMs).

It is found in the endoplasmic reticulum membrane. It carries out the reaction a 1-acyl-sn-glycero-3-phospho-(1D-myo-inositol) + an acyl-CoA = a 1,2-diacyl-sn-glycero-3-phospho-(1D-myo-inositol) + CoA. It catalyses the reaction a 1-acyl-sn-glycero-3-phospho-(1D-myo-inositol) + (5Z,8Z,11Z,14Z)-eicosatetraenoyl-CoA = a 1-acyl-2-(5Z,8Z,11Z,14Z-eicosatetraenoyl)-sn-glycero-3-phospho-(1D-myo-inositol) + CoA. The enzyme catalyses (5Z,8Z,11Z,14Z)-eicosatetraenoyl-CoA + 1-hexadecanoyl-sn-glycero-3-phosphocholine = 1-hexadecanoyl-2-(5Z,8Z,11Z,14Z-eicosatetraenoyl)-sn-glycero-3-phosphocholine + CoA. The catalysed reaction is 1-octadecanoyl-sn-glycero-3-phospho-(1D-myo-inositol) + (5Z,8Z,11Z,14Z)-eicosatetraenoyl-CoA = 1-octadecanoyl-2-(5Z,8Z,11Z,14Z-eicosatetraenoyl)-sn-glycero-3-phospho-(1D-myo-inositol) + CoA. Its pathway is lipid metabolism; phospholipid metabolism. Acyltransferase which catalyzes the transfer of an acyl group from an acyl-CoA to a lysophosphatidylinositol (1-acylglycerophosphatidylinositol or LPI) leading to the production of a phosphatidylinositol (1,2-diacyl-sn-glycero-3-phosphoinositol or PI) and participates in the reacylation step of the phospholipid remodeling pathway also known as the Lands cycle. Prefers arachidonoyl-CoA as the acyl donor, thus contributing to the regulation of free levels arachidonic acid in cell. In liver, participates in the regulation of triglyceride metabolism through the phosphatidylinositol acyl-chain remodeling regulation. The protein is Membrane-bound acylglycerophosphatidylinositol O-acyltransferase MBOAT7 (MBOAT7) of Bos taurus (Bovine).